A 254-amino-acid chain; its full sequence is Aspartate/glutamate leucyltransferase (254 aa).

This sequence belongs to the R-transferase family. Bpt subfamily.

Its subcellular location is the cytoplasm. It carries out the reaction N-terminal L-glutamyl-[protein] + L-leucyl-tRNA(Leu) = N-terminal L-leucyl-L-glutamyl-[protein] + tRNA(Leu) + H(+). The catalysed reaction is N-terminal L-aspartyl-[protein] + L-leucyl-tRNA(Leu) = N-terminal L-leucyl-L-aspartyl-[protein] + tRNA(Leu) + H(+). Functions in the N-end rule pathway of protein degradation where it conjugates Leu from its aminoacyl-tRNA to the N-termini of proteins containing an N-terminal aspartate or glutamate. The sequence is that of Aspartate/glutamate leucyltransferase from Xylella fastidiosa (strain M23).